Consider the following 202-residue polypeptide: T-cell surface glycoprotein CD3 epsilon chain (202 aa).

Residues 1–21 (MPSGSLWRVLGLCLLSVGAWG) form the signal peptide. The Extracellular portion of the chain corresponds to 22–125 (QEDNEDPLEP…NCVEVDTMTA (104 aa)). Positions 33 to 107 (PQTSASARYK…TSNSLEKNYL (75 aa)) constitute an Ig-like domain. A disulfide bridge links Cys54 with Cys96. The helical transmembrane segment at 126–146 (VAIVVADVCITLGFLLLVYYW) threads the bilayer. Residues 147 to 202 (SKNKKASSVTMMRGPGAGGRPRGQNKEKPPPVPNPDYEPIRKGQQDLYSGLNQRGI) lie on the Cytoplasmic side of the membrane. The tract at residues 156–202 (TMMRGPGAGGRPRGQNKEKPPPVPNPDYEPIRKGQQDLYSGLNQRGI) is disordered. The segment at 170–187 (QNKEKPPPVPNPDYEPIR) is NUMB-binding region. The ITAM domain occupies 173-200 (EKPPPVPNPDYEPIRKGQQDLYSGLNQR). The tract at residues 174-181 (KPPPVPNP) is proline-rich sequence. Phosphotyrosine is present on residues Tyr183 and Tyr194. Residues 192–202 (DLYSGLNQRGI) show a composition bias toward polar residues.

In terms of assembly, the TCR-CD3 complex is composed of a CD3D/CD3E and a CD3G/CD3E heterodimers that preferentially associate with TCRalpha and TCRbeta, respectively, to form TCRalpha/CD3E/CD3G and TCRbeta/CD3G/CD3E trimers. In turn, the hexamer interacts with CD3Z homodimer to form the TCR-CD3 complex. Alternatively, TCRalpha and TCRbeta can be replaced by TCRgamma and TCRdelta. Interacts with CD6. Interacts (via Proline-rich sequence) with NCK1; the interaction is ligand dependent but independent of tyrosine kinase activation. Post-translationally, phosphorylated on Tyr residues after T-cell receptor triggering by LCK in association with CD4/CD8.

Its subcellular location is the cell membrane. Functionally, part of the TCR-CD3 complex present on T-lymphocyte cell surface that plays an essential role in adaptive immune response. When antigen presenting cells (APCs) activate T-cell receptor (TCR), TCR-mediated signals are transmitted across the cell membrane by the CD3 chains CD3D, CD3E, CD3G and CD3Z. All CD3 chains contain immunoreceptor tyrosine-based activation motifs (ITAMs) in their cytoplasmic domain. Upon TCR engagement, these motifs become phosphorylated by Src family protein tyrosine kinases LCK and FYN, resulting in the activation of downstream signaling pathways. In addition of this role of signal transduction in T-cell activation, CD3E plays an essential role in correct T-cell development. Also participates in internalization and cell surface down-regulation of TCR-CD3 complexes via endocytosis sequences present in CD3E cytosolic region. In addition to its role as a TCR coreceptor, it serves as a receptor for ITPRIPL1. Ligand recognition inhibits T-cell activation by promoting interaction with NCK1, which prevents CD3E-ZAP70 interaction and blocks the ERK-NFkB signaling cascade and calcium influx. The protein is T-cell surface glycoprotein CD3 epsilon chain (CD3E) of Felis catus (Cat).